A 417-amino-acid chain; its full sequence is Serine--tRNA ligase (417 aa).

Residue 226–228 coordinates L-serine; that stretch reads TSE. ATP-binding positions include 257-259 and Val-273; that span reads RRE. Position 280 (Glu-280) interacts with L-serine. 344 to 347 is a binding site for ATP; it reads ELTS. Residue Thr-379 coordinates L-serine.

Belongs to the class-II aminoacyl-tRNA synthetase family. Type-1 seryl-tRNA synthetase subfamily. As to quaternary structure, homodimer. The tRNA molecule binds across the dimer.

It is found in the cytoplasm. It carries out the reaction tRNA(Ser) + L-serine + ATP = L-seryl-tRNA(Ser) + AMP + diphosphate + H(+). The enzyme catalyses tRNA(Sec) + L-serine + ATP = L-seryl-tRNA(Sec) + AMP + diphosphate + H(+). It functions in the pathway aminoacyl-tRNA biosynthesis; selenocysteinyl-tRNA(Sec) biosynthesis; L-seryl-tRNA(Sec) from L-serine and tRNA(Sec): step 1/1. Functionally, catalyzes the attachment of serine to tRNA(Ser). Is also able to aminoacylate tRNA(Sec) with serine, to form the misacylated tRNA L-seryl-tRNA(Sec), which will be further converted into selenocysteinyl-tRNA(Sec). The sequence is that of Serine--tRNA ligase from Mycobacterium sp. (strain KMS).